The chain runs to 237 residues: Putative HTH-type transcriptional regulator ycf28 (237 aa).

One can recognise an HTH crp-type domain in the interval 155 to 228 (KSITNRLISL…KKKVIIHDPI (74 aa)). Residues 188–207 (HKVLAQIIGSNRVSITRIIS) constitute a DNA-binding region (H-T-H motif).

It localises to the plastid. It is found in the chloroplast. In Porphyra purpurea (Red seaweed), this protein is Putative HTH-type transcriptional regulator ycf28 (ycf28).